The following is a 195-amino-acid chain: COMM domain-containing protein 3 (195 aa).

One can recognise a COMM domain in the interval 124 to 193; it reads HITDVSWRLE…DASKSLERAT (70 aa).

This sequence belongs to the COMM domain-containing protein 3 family. As to quaternary structure, component of the commander complex consisting of the CCC subcomplex and the retriever subcomplex. Component of the CCC (COMMD/CCDC22/CCDC93) subcomplex consisting of COMMD1, COMMD2, COMMD3, COMMD4, COMMD5, COMMD6, COMMD7, COMMD8, COMMD9, COMMD10, CCDC22 and CCDC93; within the complex forms a heterodimer with COMMD2. Interacts with NFKB1/p105. Interacts with CCDC22, CCDC93, SCNN1B, CUL3, CUL4A, CUL4B, CUL5. In terms of tissue distribution, widely expressed with highest expression in thymus.

The protein resides in the cytoplasm. It localises to the nucleus. In terms of biological role, scaffold protein in the commander complex that is essential for endosomal recycling of transmembrane cargos; the commander complex is composed of the CCC subcomplex and the retriever subcomplex. May modulate activity of cullin-RING E3 ubiquitin ligase (CRL) complexes. May down-regulate activation of NF-kappa-B. Modulates Na(+) transport in epithelial cells by regulation of apical cell surface expression of amiloride-sensitive sodium channel (ENaC) subunits. The sequence is that of COMM domain-containing protein 3 (COMMD3) from Homo sapiens (Human).